A 337-amino-acid polypeptide reads, in one-letter code: ATP-dependent 6-phosphofructokinase (337 aa).

Gly-11 serves as a coordination point for ATP. Residue 21 to 25 (RAVVR) participates in ADP binding. Residues 72 to 73 (RY) and 102 to 105 (GDGS) contribute to the ATP site. Asp-103 contributes to the Mg(2+) binding site. 125–127 (TID) contributes to the substrate binding site. Residue Asp-127 is the Proton acceptor of the active site. Arg-154 is an ADP binding site. Substrate is bound by residues Arg-162 and 169–171 (MGR). Residues 185–187 (GAD), Lys-212, and 214–216 (KNH) each bind ADP. Substrate contacts are provided by residues Glu-223, Arg-245, and 251-254 (HILR).

This sequence belongs to the phosphofructokinase type A (PFKA) family. ATP-dependent PFK group I subfamily. Prokaryotic clade 'B1' sub-subfamily. As to quaternary structure, homotetramer. The cofactor is Mg(2+).

It is found in the cytoplasm. The enzyme catalyses beta-D-fructose 6-phosphate + ATP = beta-D-fructose 1,6-bisphosphate + ADP + H(+). The protein operates within carbohydrate degradation; glycolysis; D-glyceraldehyde 3-phosphate and glycerone phosphate from D-glucose: step 3/4. Its activity is regulated as follows. Allosterically activated by ADP and other diphosphonucleosides, and allosterically inhibited by phosphoenolpyruvate. Functionally, catalyzes the phosphorylation of D-fructose 6-phosphate to fructose 1,6-bisphosphate by ATP, the first committing step of glycolysis. The sequence is that of ATP-dependent 6-phosphofructokinase from Streptococcus pyogenes serotype M4 (strain MGAS10750).